We begin with the raw amino-acid sequence, 164 residues long: UPF0305 protein MJ0646 (164 aa).

Belongs to the UPF0305 family.

In Methanocaldococcus jannaschii (strain ATCC 43067 / DSM 2661 / JAL-1 / JCM 10045 / NBRC 100440) (Methanococcus jannaschii), this protein is UPF0305 protein MJ0646.